Consider the following 344-residue polypeptide: Isopentenyl-diphosphate delta-isomerase (344 aa).

9–10 (RK) is a binding site for substrate. FMN-binding positions include 65 to 67 (AMT), serine 95, and asparagine 124. Glutamine 154 provides a ligand contact to substrate. Position 155 (glutamate 155) interacts with Mg(2+). Residues lysine 185, threonine 215, 259 to 261 (GVR), and 280 to 281 (SG) each bind FMN.

It belongs to the IPP isomerase type 2 family. In terms of assembly, homooctamer. Dimer of tetramers. The cofactor is FMN. NADPH serves as cofactor. It depends on Mg(2+) as a cofactor.

The protein resides in the cytoplasm. The enzyme catalyses isopentenyl diphosphate = dimethylallyl diphosphate. Functionally, involved in the biosynthesis of isoprenoids. Catalyzes the 1,3-allylic rearrangement of the homoallylic substrate isopentenyl (IPP) to its allylic isomer, dimethylallyl diphosphate (DMAPP). The protein is Isopentenyl-diphosphate delta-isomerase of Lacticaseibacillus casei (strain BL23) (Lactobacillus casei).